A 476-amino-acid polypeptide reads, in one-letter code: Endonuclease SceI small subunit (476 aa).

This sequence belongs to the LAGLIDADG endonuclease family. As to quaternary structure, endonuclease SceI (Endo.SceI) is a heterodimer of ENS2 and SSC1. Post-translationally, the N-terminus is blocked.

The protein localises to the mitochondrion. Functionally, catalytic component of endonuclease SceI (Endo.SceI), which cleaves specifically at multiple sites on mitochondrial DNA and produces double-stranded breaks. The sequence is that of Endonuclease SceI small subunit (ENS2) from Saccharomyces cerevisiae (Baker's yeast).